The sequence spans 452 residues: Protein mab-21-like 4 (452 aa).

This chain is Protein mab-21-like 4 (Mab21l4), found in Mus musculus (Mouse).